Consider the following 166-residue polypeptide: Cyclin-dependent kinase 4 inhibitor D (166 aa).

Methionine 1 carries the post-translational modification N-acetylmethionine. 4 ANK repeats span residues 41–69 (FGKT…SPNV), 73–102 (SGTS…DVNV), 106–135 (TGAL…LHRR), and 138–166 (RGLT…VAPL).

Belongs to the CDKN2 cyclin-dependent kinase inhibitor family. In terms of assembly, interacts with CDK6.

Its subcellular location is the nucleus. It is found in the cytoplasm. Functionally, interacts strongly with CDK4 and CDK6 and inhibits them. The protein is Cyclin-dependent kinase 4 inhibitor D (CDKN2D) of Homo sapiens (Human).